The chain runs to 223 residues: Alpha-S2-casein (223 aa).

A signal peptide spans 1–15 (MKLFIFTCLLAVALA). Phosphoserine is present on residues S23, S24, S25, S28, S46, S71, S72, and S73. Repeats lie at residues 76–128 (FADI…TLGK) and 129–223 (EQIS…ERQA). 3 positions are modified to phosphoserine: S132, S147, and S155.

This sequence belongs to the alpha-casein family. In terms of tissue distribution, mammary gland specific. Secreted in milk.

The protein resides in the secreted. Important role in the capacity of milk to transport calcium phosphate. This Cavia porcellus (Guinea pig) protein is Alpha-S2-casein (CSN1S2).